The primary structure comprises 293 residues: Fructose-bisphosphate aldolase (293 aa).

S50 is a binding site for D-glyceraldehyde 3-phosphate. The active-site Proton donor is the D85. Zn(2+) contacts are provided by H86, D106, E136, and H178. G179 contributes to the dihydroxyacetone phosphate binding site. H208 contacts Zn(2+). Dihydroxyacetone phosphate-binding positions include 209 to 211 and 230 to 233; these read GGS and NVNT.

The protein belongs to the class II fructose-bisphosphate aldolase family. Zn(2+) is required as a cofactor.

The catalysed reaction is beta-D-fructose 1,6-bisphosphate = D-glyceraldehyde 3-phosphate + dihydroxyacetone phosphate. It functions in the pathway carbohydrate degradation; glycolysis; D-glyceraldehyde 3-phosphate and glycerone phosphate from D-glucose: step 4/4. Functionally, catalyzes the aldol condensation of dihydroxyacetone phosphate (DHAP or glycerone-phosphate) with glyceraldehyde 3-phosphate (G3P) to form fructose 1,6-bisphosphate (FBP) in gluconeogenesis and the reverse reaction in glycolysis. In Streptococcus pyogenes serotype M6 (strain ATCC BAA-946 / MGAS10394), this protein is Fructose-bisphosphate aldolase (fba).